The primary structure comprises 421 residues: Gamma-glutamyl phosphate reductase (421 aa).

It belongs to the gamma-glutamyl phosphate reductase family.

It localises to the cytoplasm. It carries out the reaction L-glutamate 5-semialdehyde + phosphate + NADP(+) = L-glutamyl 5-phosphate + NADPH + H(+). It functions in the pathway amino-acid biosynthesis; L-proline biosynthesis; L-glutamate 5-semialdehyde from L-glutamate: step 2/2. In terms of biological role, catalyzes the NADPH-dependent reduction of L-glutamate 5-phosphate into L-glutamate 5-semialdehyde and phosphate. The product spontaneously undergoes cyclization to form 1-pyrroline-5-carboxylate. The sequence is that of Gamma-glutamyl phosphate reductase from Pseudomonas aeruginosa (strain UCBPP-PA14).